Here is a 1371-residue protein sequence, read N- to C-terminus: Pleckstrin homology-like domain family B member 1 (1371 aa).

A Phosphoserine modification is found at Ser-51. Positions 64–125 (TVIGSAARDI…LTQGCMLCLG (62 aa)) constitute an FHA domain. Arg-131 bears the Asymmetric dimethylarginine mark. Positions 153 to 182 (GPTYNPGSAESESLVNGNHTAQPATRAPSA) are disordered. Residues 157-175 (NPGSAESESLVNGNHTAQP) are compositionally biased toward polar residues. Phosphoserine occurs at positions 192, 220, and 223. Disordered stretches follow at residues 211–336 (AAGK…TDSP) and 368–573 (PSSG…RVPI). Composition is skewed to low complexity over residues 252–273 (SPAFSPLSSPASSGSCASHSPS) and 296–312 (LQPPQSRPSGSRSSDSP). A phosphoserine mark is found at Ser-325 and Ser-335. Polar residues predominate over residues 368–377 (PSSGARSQPA). A phosphoserine mark is found at Ser-382, Ser-405, Ser-431, Ser-445, Ser-463, Ser-472, Ser-491, and Ser-503. A compositionally biased stretch (low complexity) spans 464-477 (PSLSRRALSPLPAR). Residues 483–493 (KLSREVAESPR) are compositionally biased toward basic and acidic residues. Arg-514 is subject to Omega-N-methylarginine. Ser-520 and Ser-522 each carry phosphoserine. Phosphothreonine is present on Thr-524. Ser-535, Ser-541, Ser-553, Ser-557, Ser-565, Ser-580, Ser-585, and Ser-683 each carry phosphoserine. Positions 547 to 559 (GSLTGASPRQSPR) are enriched in polar residues. Disordered regions lie at residues 672–714 (ESGG…GAKH) and 942–1020 (GLAA…QNGT). Basic and acidic residues-rich tracts occupy residues 682-696 (ESMERSDEENLKEEC) and 703-714 (QQEHEDAPGAKH). Residues 688–798 (DEENLKEECS…ETGIQKDRDK (111 aa)) adopt a coiled-coil conformation. Residues Ser-976 and Ser-1022 each carry the phosphoserine modification. The segment covering 976–997 (SPLPRTRSGPLPSSSGSSSSSS) has biased composition (low complexity). The interval 1124-1143 (SMETSISTGGNSACSPDNMS) is disordered. Residues 1150–1216 (MGKIEEMEKM…QQLVEKEVKL (67 aa)) adopt a coiled-coil conformation. Residues 1261–1364 (SKVCRGYLIK…WMDVIVTGAE (104 aa)) form the PH domain.

This Mus musculus (Mouse) protein is Pleckstrin homology-like domain family B member 1 (Phldb1).